Here is a 413-residue protein sequence, read N- to C-terminus: Phosphopentomutase (413 aa).

Mn(2+) is bound by residues aspartate 11, aspartate 306, histidine 311, aspartate 347, histidine 348, and histidine 359.

The protein belongs to the phosphopentomutase family. Mn(2+) is required as a cofactor.

Its subcellular location is the cytoplasm. The catalysed reaction is 2-deoxy-alpha-D-ribose 1-phosphate = 2-deoxy-D-ribose 5-phosphate. It carries out the reaction alpha-D-ribose 1-phosphate = D-ribose 5-phosphate. Its pathway is carbohydrate degradation; 2-deoxy-D-ribose 1-phosphate degradation; D-glyceraldehyde 3-phosphate and acetaldehyde from 2-deoxy-alpha-D-ribose 1-phosphate: step 1/2. Functionally, isomerase that catalyzes the conversion of deoxy-ribose 1-phosphate (dRib-1-P) and ribose 1-phosphate (Rib-1-P) to deoxy-ribose 5-phosphate (dRib-5-P) and ribose 5-phosphate (Rib-5-P), respectively. The sequence is that of Phosphopentomutase from Helicobacter pylori (strain J99 / ATCC 700824) (Campylobacter pylori J99).